The sequence spans 119 residues: Acidic phospholipase A2 DE-III (119 aa).

7 disulfides stabilise this stretch: cysteine 11–cysteine 72, cysteine 26–cysteine 118, cysteine 28–cysteine 44, cysteine 43–cysteine 99, cysteine 50–cysteine 92, cysteine 60–cysteine 85, and cysteine 79–cysteine 90. The Ca(2+) site is built by tyrosine 27, glycine 29, and glycine 31. Histidine 47 is an active-site residue. Position 48 (aspartate 48) interacts with Ca(2+). Residue aspartate 93 is part of the active site.

Belongs to the phospholipase A2 family. Group I subfamily. D49 sub-subfamily. It depends on Ca(2+) as a cofactor. In terms of tissue distribution, expressed by the venom gland.

The protein resides in the secreted. The enzyme catalyses a 1,2-diacyl-sn-glycero-3-phosphocholine + H2O = a 1-acyl-sn-glycero-3-phosphocholine + a fatty acid + H(+). Functionally, PLA2 catalyzes the calcium-dependent hydrolysis of the 2-acyl groups in 3-sn-phosphoglycerides. The protein is Acidic phospholipase A2 DE-III of Naja melanoleuca (Forest cobra).